Consider the following 281-residue polypeptide: 4-hydroxy-3-methylbut-2-enyl diphosphate reductase (281 aa).

[4Fe-4S] cluster is bound at residue Cys-12. His-41 and His-74 together coordinate (2E)-4-hydroxy-3-methylbut-2-enyl diphosphate. The dimethylallyl diphosphate site is built by His-41 and His-74. Isopentenyl diphosphate-binding residues include His-41 and His-74. Cys-96 is a binding site for [4Fe-4S] cluster. (2E)-4-hydroxy-3-methylbut-2-enyl diphosphate is bound at residue His-124. His-124 is a dimethylallyl diphosphate binding site. Position 124 (His-124) interacts with isopentenyl diphosphate. Glu-126 (proton donor) is an active-site residue. Position 164 (Thr-164) interacts with (2E)-4-hydroxy-3-methylbut-2-enyl diphosphate. Position 193 (Cys-193) interacts with [4Fe-4S] cluster. Residues Ser-221, Asn-223, and Ser-265 each coordinate (2E)-4-hydroxy-3-methylbut-2-enyl diphosphate. Residues Ser-221, Asn-223, and Ser-265 each contribute to the dimethylallyl diphosphate site. Positions 221, 223, and 265 each coordinate isopentenyl diphosphate.

Belongs to the IspH family. [4Fe-4S] cluster serves as cofactor.

The catalysed reaction is isopentenyl diphosphate + 2 oxidized [2Fe-2S]-[ferredoxin] + H2O = (2E)-4-hydroxy-3-methylbut-2-enyl diphosphate + 2 reduced [2Fe-2S]-[ferredoxin] + 2 H(+). It catalyses the reaction dimethylallyl diphosphate + 2 oxidized [2Fe-2S]-[ferredoxin] + H2O = (2E)-4-hydroxy-3-methylbut-2-enyl diphosphate + 2 reduced [2Fe-2S]-[ferredoxin] + 2 H(+). It participates in isoprenoid biosynthesis; dimethylallyl diphosphate biosynthesis; dimethylallyl diphosphate from (2E)-4-hydroxy-3-methylbutenyl diphosphate: step 1/1. Its pathway is isoprenoid biosynthesis; isopentenyl diphosphate biosynthesis via DXP pathway; isopentenyl diphosphate from 1-deoxy-D-xylulose 5-phosphate: step 6/6. Catalyzes the conversion of 1-hydroxy-2-methyl-2-(E)-butenyl 4-diphosphate (HMBPP) into a mixture of isopentenyl diphosphate (IPP) and dimethylallyl diphosphate (DMAPP). Acts in the terminal step of the DOXP/MEP pathway for isoprenoid precursor biosynthesis. This chain is 4-hydroxy-3-methylbut-2-enyl diphosphate reductase, found in Oleidesulfovibrio alaskensis (strain ATCC BAA-1058 / DSM 17464 / G20) (Desulfovibrio alaskensis).